The chain runs to 267 residues: Pre-protein VI (267 aa).

The propeptide occupies 1–33; it reads MEDINFASLAPRHGSRPFMGTWNEIGTSQLNGG. Residues 34–54 are amphipathic alpha-helix essential for membrane lytic activity; it reads AFSWSSLWSGIKNFGSSIKSF. The segment at 36–53 is involved in endosomal membrane lysis; sequence SWSSLWSGIKNFGSSIKS. The interval 48–74 is interaction with hexon protein; the sequence is GSSIKSFGNKAWNSNTGQMLRDKLKDQ. Residues 67-76 carry the Nuclear export signal motif; it reads LRDKLKDQNF. Disordered stretches follow at residues 107 to 184 and 199 to 230; these read LENS…PMTK and KPVTLELPPPVPTVPPMPAPTLGTAVSRPTAP. 2 stretches are compositionally biased toward basic and acidic residues: residues 123–135 and 146–155; these read PKVEEVEVEEKLP and KGEKRPRPDL. Positions 149 to 153 match the Nuclear localization signal motif; the sequence is KRPRP. The PPXY motif motif lies at 166–169; the sequence is PPSY. The span at 205 to 217 shows a compositional bias: pro residues; the sequence is LPPPVPTVPPMPA. The segment covering 218–230 has biased composition (low complexity); sequence PTLGTAVSRPTAP. Residues 248–259 carry the Nuclear export signal motif; sequence STLNSIVGLGVK. The interaction with hexon protein stretch occupies residues 250-256; that stretch reads LNSIVGL. The tract at residues 257-267 is binds to importin alpha/beta, involved in hexon nuclear import; that stretch reads GVKSLKRRRCY. The Nuclear localization signal signature appears at 262–265; it reads KRRR.

Belongs to the adenoviridae protein VI family. As to quaternary structure, interacts with hexon protein; this interaction allows nuclear import of hexon trimers and possibly pre-capsid assembly. Interacts (via C-terminal NLS) with importin alpha/beta. Interacts (via PPxY motif) with host NEDD4 ubiquitine ligase; this interaction might play a role in virus intracellular transport during entry. Part of a complex composed of the core-capsid bridging protein, the endosome lysis protein VI and the hexon-linking protein VIII; these interactions bridge the virus core to the capsid. Interacts with peripentonal hexons; this interaction stabilizes the capsid by gluing two peripentonal hexons together and joining them with an adjacent group-of-nine hexon. In terms of assembly, heterodimer with the viral protease; disulfide-linked. Interacts with the viral protease. Ubiquitinated by Nedd4 following partial capsid disassembly; which might play a role in intracellular virus movement during entry. Post-translationally, contains the major nuclear import and export signals. Proteolytically removed during virion maturation. The processing of the C-terminus turns the precursor into a mature viral structural protein and abrogates its ability to promote hexon import and act as a potential chaperone protein.

It is found in the host nucleus. Its subcellular location is the host cytoplasm. The protein localises to the virion. In terms of biological role, during virus assembly, promotes hexon trimers nuclear import through nuclear pore complexes via an importin alpha/beta-dependent mechanism. By analogy to herpesviruses capsid assembly, might act as a chaperone to promote the formation of the icosahedral capsid. Structural component of the virion that provides increased stability to the particle shell through its interaction with the core-capsid bridging protein and the hexon-linking protein VIII. Fibers shedding during virus entry into host cell allows the endosome lysis protein to be exposed as a membrane-lytic peptide. Exhibits pH-independent membrane fragmentation activity and probably mediates viral rapid escape from host endosome via organellar membrane lysis. It is not clear if it then remains partially associated with the capsid and involved in the intracellular microtubule-dependent transport of capsid to the nucleus, or if it is lost during endosomal penetration. Its function is as follows. Cofactor that activates the viral protease. Binds to viral protease in a 1:1 ratio. In Homo sapiens (Human), this protein is Pre-protein VI.